Consider the following 245-residue polypeptide: Chymotrypsin B (245 aa).

5 disulfides stabilise this stretch: C1-C121, C42-C58, C135-C201, C167-C182, and C191-C220. A propeptide spanning residues 14 to 15 (AR) is cleaved from the precursor. The 228-residue stretch at 16 to 243 (IVNGEEAVPH…LRGWVDQILA (228 aa)) folds into the Peptidase S1 domain. Catalysis depends on charge relay system residues H57 and D101. Catalysis depends on S195, which acts as the Charge relay system.

Belongs to the peptidase S1 family.

The protein localises to the secreted. It is found in the extracellular space. It carries out the reaction Preferential cleavage: Tyr-|-Xaa, Trp-|-Xaa, Phe-|-Xaa, Leu-|-Xaa.. The chain is Chymotrypsin B from Gadus morhua (Atlantic cod).